The sequence spans 522 residues: Transcription factor SPT20 homolog (522 aa).

Residue Ser-284 is modified to Phosphoserine. Disordered stretches follow at residues 361–380 (DEES…DHSN) and 408–522 (PVKM…RHES). Over residues 412-425 (SHSSSGSASLSQVS) the composition is skewed to low complexity. Residues 433 to 442 (TETVSVQSSV) show a composition bias toward polar residues. Residues 458–467 (SSSGNSSSGN) show a composition bias toward low complexity. Positions 481–492 (PTPPPSSKPPTI) are enriched in pro residues. Thr-482 carries the phosphothreonine modification. Low complexity predominate over residues 506–522 (LSPAALSPASSSQRHES). Residues Ser-507 and Ser-512 each carry the phosphoserine modification.

Belongs to the SPT20 family. Interacts with ATG9A. Interacts with MAPK14.

In terms of biological role, required for MAP kinase p38 (MAPK11, MAPK12, MAPK13 and/or MAPK14) activation during gastrulation. Required for down-regulation of E-cadherin during gastrulation by regulating E-cadherin protein level downstream from NCK-interacting kinase (NIK) and independently of the regulation of transcription by FGF signaling and Snail. Required for starvation-induced ATG9A trafficking during autophagy. This is Transcription factor SPT20 homolog (SUPT20H) from Pongo abelii (Sumatran orangutan).